A 77-amino-acid polypeptide reads, in one-letter code: Conodipine-M alpha chain (77 aa).

The residue at position 1 (Gln-1) is a Pyrrolidone carboxylic acid. Residue His-36 is part of the active site.

In terms of assembly, heterodimer of an alpha and a beta chains; probably disulfide-linked. Ca(2+) serves as cofactor. In terms of tissue distribution, expressed by the venom duct.

It is found in the secreted. It carries out the reaction a 1,2-diacyl-sn-glycero-3-phosphocholine + H2O = a 1-acyl-sn-glycero-3-phosphocholine + a fatty acid + H(+). Its activity is regulated as follows. Inhibited by linoleoyl amide and MG14. Functionally, heterodimer: conodipine-M catalyzes the calcium-dependent hydrolysis of the 2-acyl groups in 3-sn-phosphoglycerides. This activity may be supported by the alpha chain. Conodipine-M inhibits the binding of isradipine (a ligand specific for L-type calcium channel) to L-type calcium channels. In Conus magus (Magical cone), this protein is Conodipine-M alpha chain.